The sequence spans 140 residues: Small ribosomal subunit protein bS6 (140 aa).

Residues 96–140 (VTGQSEMLKAEENRSERRERRERPENAESNDGDDSDSNDSDNADE) are disordered. Over residues 103–121 (LKAEENRSERRERRERPEN) the composition is skewed to basic and acidic residues. Residues 123–140 (ESNDGDDSDSNDSDNADE) are compositionally biased toward acidic residues.

The protein belongs to the bacterial ribosomal protein bS6 family.

In terms of biological role, binds together with bS18 to 16S ribosomal RNA. The polypeptide is Small ribosomal subunit protein bS6 (Ectopseudomonas mendocina (strain ymp) (Pseudomonas mendocina)).